Consider the following 457-residue polypeptide: tRNA modification GTPase MnmE (457 aa).

(6S)-5-formyl-5,6,7,8-tetrahydrofolate is bound by residues Arg-25, Glu-87, and Arg-126. The 155-residue stretch at 223–377 (GISTAIIGRP…IEERINNLFF (155 aa)) folds into the TrmE-type G domain. A K(+)-binding site is contributed by Asn-233. GTP contacts are provided by residues 233–238 (NVGKSS), 252–258 (TDIAGTT), and 277–280 (DTAG). Ser-237 is a binding site for Mg(2+). Residues Thr-252, Ile-254, and Thr-257 each coordinate K(+). Thr-258 contacts Mg(2+). Lys-457 lines the (6S)-5-formyl-5,6,7,8-tetrahydrofolate pocket.

It belongs to the TRAFAC class TrmE-Era-EngA-EngB-Septin-like GTPase superfamily. TrmE GTPase family. As to quaternary structure, homodimer. Heterotetramer of two MnmE and two MnmG subunits. The cofactor is K(+).

Its subcellular location is the cytoplasm. In terms of biological role, exhibits a very high intrinsic GTPase hydrolysis rate. Involved in the addition of a carboxymethylaminomethyl (cmnm) group at the wobble position (U34) of certain tRNAs, forming tRNA-cmnm(5)s(2)U34. The chain is tRNA modification GTPase MnmE from Streptococcus pneumoniae (strain Hungary19A-6).